Consider the following 223-residue polypeptide: Putative protein phosphatase 2C 63 (223 aa).

Residues 1–22 are disordered; the sequence is MASSQQAVRETGRGRASSSSAG. The 212-residue stretch at 1 to 212 folds into the PPM-type phosphatase domain; sequence MASSQQAVRE…RNFHVHSSHV (212 aa).

Belongs to the PP2C family.

The enzyme catalyses O-phospho-L-seryl-[protein] + H2O = L-seryl-[protein] + phosphate. The catalysed reaction is O-phospho-L-threonyl-[protein] + H2O = L-threonyl-[protein] + phosphate. The chain is Putative protein phosphatase 2C 63 from Oryza sativa subsp. japonica (Rice).